The following is a 228-amino-acid chain: Transmembrane protein 186 (228 aa).

Over 1–93 the chain is Mitochondrial matrix; that stretch reads MDMMMMSTRL…RGLRALSRLK (93 aa). Residues 94–112 form a helical membrane-spanning segment; that stretch reads LLQTGITVVLLPTVYYLHL. Residues 113–118 are Mitochondrial intermembrane-facing; the sequence is QGQASV. Residues 119 to 141 form a helical membrane-spanning segment; that stretch reads LVLNRSIGIALFAGVMLYSISHF. Residues 142–228 are Mitochondrial matrix-facing; it reads VRRVVGMMYL…AFGKVFGSLS (87 aa).

Belongs to the TMEM186 family.

It localises to the mitochondrion inner membrane. May be required for efficient assembly of the mitochondrial complex I. This is Transmembrane protein 186 from Danio rerio (Zebrafish).